The primary structure comprises 330 residues: Aspartate--ammonia ligase (330 aa).

This sequence belongs to the class-II aminoacyl-tRNA synthetase family. AsnA subfamily.

It localises to the cytoplasm. It catalyses the reaction L-aspartate + NH4(+) + ATP = L-asparagine + AMP + diphosphate + H(+). The protein operates within amino-acid biosynthesis; L-asparagine biosynthesis; L-asparagine from L-aspartate (ammonia route): step 1/1. This chain is Aspartate--ammonia ligase, found in Escherichia fergusonii (strain ATCC 35469 / DSM 13698 / CCUG 18766 / IAM 14443 / JCM 21226 / LMG 7866 / NBRC 102419 / NCTC 12128 / CDC 0568-73).